We begin with the raw amino-acid sequence, 739 residues long: Polyribonucleotide nucleotidyltransferase (739 aa).

Positions 514 and 520 each coordinate Mg(2+). In terms of domain architecture, KH spans 580-639 (PRIITVKIPVDKIGEVIGPKGKMINQIQEDTGADITIEDDGTIYIGAAQGSQAEAARATI). An S1 motif domain is found at 651 to 723 (GERYLGTVVK…SRGKLSLIPV (73 aa)).

It belongs to the polyribonucleotide nucleotidyltransferase family. Mg(2+) serves as cofactor.

It is found in the cytoplasm. It catalyses the reaction RNA(n+1) + phosphate = RNA(n) + a ribonucleoside 5'-diphosphate. Involved in mRNA degradation. Catalyzes the phosphorolysis of single-stranded polyribonucleotides processively in the 3'- to 5'-direction. The polypeptide is Polyribonucleotide nucleotidyltransferase (Streptomyces coelicolor (strain ATCC BAA-471 / A3(2) / M145)).